Here is a 593-residue protein sequence, read N- to C-terminus: Developmental and secondary metabolism regulator VEL1 (593 aa).

The span at 1-16 (MSNIVVSNETKSQSVR) shows a compositional bias: polar residues. A disordered region spans residues 1–21 (MSNIVVSNETKSQSVRTTKDG). In terms of domain architecture, Velvet spans 21-212 (GRQIRYNLQV…AEQGCRVRIR (192 aa)). Residues 35 to 40 (ERARAC) carry the Nuclear localization signal motif. The tract at residues 218–569 (RRRENKSSKE…PGSPDMEEPM (352 aa)) is disordered. The span at 310–326 (PSYGSNQPQYSQQYQTP) shows a compositional bias: low complexity. Residues 327–340 (QPAPMMQPPQPPQH) are compositionally biased toward pro residues. Low complexity-rich tracts occupy residues 341–360 (STPYSQHSQHSSYSSQHQAQ) and 367–389 (QQYGYSNYQQQPQQPQSQSQPQY). 2 stretches are compositionally biased toward polar residues: residues 413 to 429 (SSITQSPAQQYTASSHP) and 440 to 449 (GRSQQMSQPL). Positions 443–487 (QQMSQPLHSSPQSYASSAPSHQSLPSLRPIVADKLEPVSPSYQSP) are PEST. A compositionally biased stretch (low complexity) spans 450-465 (HSSPQSYASSAPSHQS). Polar residues-rich tracts occupy residues 482-505 (PSYQSPPTSMSAAISVNSDGSNQH) and 512-534 (NPQTQGLPPMSATSNKRSFSSTF).

Belongs to the velvet family. VeA subfamily. Component of the heterotrimeric velvet complex composed of LAE1, VEL1 and VEL2; VEL1 acting as a bridging protein between LAE1 and VEL2.

It is found in the nucleus. It localises to the cytoplasm. Component of the velvet transcription factor complex that controls sexual/asexual developmental ratio in response to light, promoting sexual development in the darkness while stimulating asexual sporulation under illumination. The velvet complex acts as a global regulator for secondary metabolite gene expression. Controls the expression of the T-toxin gene cluster. Promotes oxidative stress tolerance and acts as a virulence factors during infection. Negatively regulate mycelial pigmentation and controls sexual development, as well as asexual development during vegetative growth. This is Developmental and secondary metabolism regulator VEL1 from Cochliobolus heterostrophus (strain C5 / ATCC 48332 / race O) (Southern corn leaf blight fungus).